The sequence spans 290 residues: 4-diphosphocytidyl-2-C-methyl-D-erythritol kinase (290 aa).

Residue Lys12 is part of the active site. An ATP-binding site is contributed by 97–107; the sequence is PVASGIGGGSA. Asp139 is an active-site residue.

Belongs to the GHMP kinase family. IspE subfamily.

The enzyme catalyses 4-CDP-2-C-methyl-D-erythritol + ATP = 4-CDP-2-C-methyl-D-erythritol 2-phosphate + ADP + H(+). The protein operates within isoprenoid biosynthesis; isopentenyl diphosphate biosynthesis via DXP pathway; isopentenyl diphosphate from 1-deoxy-D-xylulose 5-phosphate: step 3/6. In terms of biological role, catalyzes the phosphorylation of the position 2 hydroxy group of 4-diphosphocytidyl-2C-methyl-D-erythritol. This Parvibaculum lavamentivorans (strain DS-1 / DSM 13023 / NCIMB 13966) protein is 4-diphosphocytidyl-2-C-methyl-D-erythritol kinase.